Consider the following 340-residue polypeptide: Selenide, water dikinase (340 aa).

Selenocysteine 17 is an active-site residue. A non-standard amino acid (selenocysteine) is located at residue selenocysteine 17. Residues lysine 20 and 45–47 each bind ATP; that span reads NNE. Aspartate 48 is a Mg(2+) binding site. Residues aspartate 65, aspartate 88, and 136–138 each bind ATP; that span reads GHT. Aspartate 88 is a binding site for Mg(2+). Mg(2+) is bound at residue aspartate 224.

The protein belongs to the selenophosphate synthase 1 family. Class I subfamily. In terms of assembly, homodimer. Mg(2+) is required as a cofactor.

The catalysed reaction is hydrogenselenide + ATP + H2O = selenophosphate + AMP + phosphate + 2 H(+). Its function is as follows. Synthesizes selenophosphate from selenide and ATP. This chain is Selenide, water dikinase, found in Campylobacter jejuni (strain RM1221).